The chain runs to 504 residues: ATP synthase subunit alpha (504 aa).

172 to 179 (GDRQTGKT) is a binding site for ATP.

The protein belongs to the ATPase alpha/beta chains family. As to quaternary structure, F-type ATPases have 2 components, CF(1) - the catalytic core - and CF(0) - the membrane proton channel. CF(1) has five subunits: alpha(3), beta(3), gamma(1), delta(1), epsilon(1). CF(0) has three main subunits: a(1), b(2) and c(9-12). The alpha and beta chains form an alternating ring which encloses part of the gamma chain. CF(1) is attached to CF(0) by a central stalk formed by the gamma and epsilon chains, while a peripheral stalk is formed by the delta and b chains.

The protein resides in the cell inner membrane. It carries out the reaction ATP + H2O + 4 H(+)(in) = ADP + phosphate + 5 H(+)(out). Its function is as follows. Produces ATP from ADP in the presence of a proton gradient across the membrane. The alpha chain is a regulatory subunit. The polypeptide is ATP synthase subunit alpha (Petrotoga mobilis (strain DSM 10674 / SJ95)).